The primary structure comprises 313 residues: Malate dehydrogenase (313 aa).

NAD(+)-binding positions include 8–13 (GAGNVG) and aspartate 33. Substrate is bound by residues arginine 83 and arginine 89. Residues asparagine 96 and 119–121 (ISN) contribute to the NAD(+) site. Positions 121 and 152 each coordinate substrate. Histidine 176 acts as the Proton acceptor in catalysis.

This sequence belongs to the LDH/MDH superfamily. MDH type 3 family.

The catalysed reaction is (S)-malate + NAD(+) = oxaloacetate + NADH + H(+). In terms of biological role, catalyzes the reversible oxidation of malate to oxaloacetate. This Bacteroides fragilis (strain ATCC 25285 / DSM 2151 / CCUG 4856 / JCM 11019 / LMG 10263 / NCTC 9343 / Onslow / VPI 2553 / EN-2) protein is Malate dehydrogenase.